A 179-amino-acid polypeptide reads, in one-letter code: uncharacterized protein (179 aa).

The segment covering 1-15 has biased composition (basic and acidic residues); that stretch reads MQRQTGHMEDKKRTG. Positions 1-32 are disordered; it reads MQRQTGHMEDKKRTGLESQGTENAFSDGRDGK.

This is an uncharacterized protein from Gallus gallus (Chicken).